A 443-amino-acid chain; its full sequence is Protein king tubby (443 aa).

Disordered stretches follow at residues 57–80 (TNGSPGGINPVAMNTSRNHSNNMR) and 98–191 (HELE…EGDV). Positions 68–80 (AMNTSRNHSNNMR) are enriched in polar residues. The segment covering 113–128 (QHQQSASHSANSTQSQ) has biased composition (low complexity). Residue serine 136 is modified to Phosphoserine. Residues 177-186 (NGTGNGTGGE) are compositionally biased toward gly residues.

Belongs to the TUB family.

The protein localises to the cytoplasm. It is found in the nucleus. The protein resides in the cell projection. It localises to the cilium membrane. Its subcellular location is the rhabdomere. The protein is Protein king tubby of Drosophila simulans (Fruit fly).